Here is a 425-residue protein sequence, read N- to C-terminus: Argininosuccinate synthase (425 aa).

ATP is bound by residues 7–15 (AYSGGLDTS) and Ala-33. Position 84 (Tyr-84) interacts with L-citrulline. Gly-114 serves as a coordination point for ATP. 3 residues coordinate L-aspartate: Thr-116, Asn-120, and Asp-121. Asn-120 contributes to the L-citrulline binding site. The L-citrulline site is built by Arg-124, Ser-177, Ser-186, Glu-267, and Tyr-279.

Belongs to the argininosuccinate synthase family. Type 1 subfamily. In terms of assembly, homotetramer.

The protein localises to the cytoplasm. It carries out the reaction L-citrulline + L-aspartate + ATP = 2-(N(omega)-L-arginino)succinate + AMP + diphosphate + H(+). Its pathway is amino-acid biosynthesis; L-arginine biosynthesis; L-arginine from L-ornithine and carbamoyl phosphate: step 2/3. The sequence is that of Argininosuccinate synthase from Pseudothermotoga lettingae (strain ATCC BAA-301 / DSM 14385 / NBRC 107922 / TMO) (Thermotoga lettingae).